A 765-amino-acid chain; its full sequence is Glycine--tRNA ligase (765 aa).

The N-terminal 87 residues, 1 to 87 (MSLQLLKALP…LRSAAAEFIM (87 aa)), are a transit peptide targeting the mitochondrion. The tract at residues 41 to 73 (TTTKPTPSAPPPPPPTQPQQPAATTSWGTKKQN) is disordered. The segment covering 47–58 (PSAPPPPPPTQP) has biased composition (pro residues). The region spanning 95 to 151 (QLAPLRERVQEQGNLVRDLKAKGAPEIDVKKAVAELKARKKLLEDKELALTPSVVSF) is the WHEP-TRS domain. Residue E331 participates in glycine binding. Residues 363–365 (RNE) and 374–375 (RV) contribute to the ATP site. E382 is a glycine binding site. Position 489–490 (489–490 (EC)) interacts with ATP. 609-611 (EPS) provides a ligand contact to glycine. R616 is a binding site for ATP.

Belongs to the class-II aminoacyl-tRNA synthetase family. As to quaternary structure, homodimer.

Its subcellular location is the mitochondrion. The protein resides in the cytoplasm. It localises to the cell projection. The protein localises to the axon. It catalyses the reaction 2 ATP + H(+) = P(1),P(4)-bis(5'-adenosyl) tetraphosphate + diphosphate. The catalysed reaction is tRNA(Gly) + glycine + ATP = glycyl-tRNA(Gly) + AMP + diphosphate. In terms of biological role, catalyzes the ATP-dependent ligation of glycine to the 3'-end of its cognate tRNA, via the formation of an aminoacyl-adenylate intermediate (Gly-AMP). Also produces diadenosine tetraphosphate (Ap4A), a universal pleiotropic signaling molecule needed for cell regulation pathways, by direct condensation of 2 ATPs. Thereby, may play a special role in Ap4A homeostasis. Required for terminal arborization of both dendrites and axons during development. The chain is Glycine--tRNA ligase from Drosophila melanogaster (Fruit fly).